An 814-amino-acid chain; its full sequence is Phosphatidylinositol 3-kinase VPS34 (814 aa).

The C2 PI3K-type domain maps to 25 to 177 (LDGNLPVKKS…EKLMNKYERG (153 aa)). In terms of domain architecture, PIK helical spans 274 to 449 (DRDLKPSNIE…YSTYELLEEN (176 aa)). The 268-residue stretch at 532–799 (VAGESSLFKS…LINESVSALF (268 aa)) folds into the PI3K/PI4K catalytic domain. The tract at residues 538-544 (LFKSALH) is G-loop. The segment at 668–676 (GIGDRHLDN) is catalytic loop. Residues 687–708 (HVDFAFILGRDPKPFPPPMKLC) form an activation loop region.

Belongs to the PI3/PI4-kinase family. As to quaternary structure, interacts with VPS15. Component of a complex made of VPS38/USL1 and PI3K main subunits such as VPS15, ATG6/VPS30 and VPS34. Binds directly to VPS38/USL1.

The enzyme catalyses a 1,2-diacyl-sn-glycero-3-phospho-(1D-myo-inositol) + ATP = a 1,2-diacyl-sn-glycero-3-phospho-(1D-myo-inositol-3-phosphate) + ADP + H(+). The PI3K inhibitor LY294002 affects phosphatidylinositol 3-phosphate (PI3P) levels and triggers a decrease in proline, hydrophobic and aromatic amino acids, and sugars (e.g. raffinose) accumulation in response to salt treatment correlated with lower P5CS1 expression and higher ProDH1 expression, genes involved in proline biosynthesis and catabolism, respectively. Functionally, involved in the negative regulation of proline, hydrophobic and aromatic amino acids accumulation, especially in response to salt (NaCl), either through inhibition of their synthesis and/or promotion of their catabolism. Triggers defense responses (e.g. pathogenesis related (PR1 and PR5) gene expression and hydrogen peroxide H(2)O(2) burst) to the bacterial pathogen compatible Pseudomonas syringae pv tomato DC3000 (Pst DC3000) and incompatible Pst DC3000 (avrRpt2), by regulating reactive ogygen species (ROS) production and by promoting stomatal closure. This Arabidopsis thaliana (Mouse-ear cress) protein is Phosphatidylinositol 3-kinase VPS34.